A 222-amino-acid polypeptide reads, in one-letter code: UPF0758 protein HSM_0009 (222 aa).

Positions 99-222 constitute an MPN domain; it reads QEFTSPDTVR…YFSFAEQGWI (124 aa). Zn(2+) contacts are provided by histidine 171, histidine 173, and aspartate 184. The JAMM motif motif lies at 171-184; sequence HNHPSGVSTPSMAD.

The protein belongs to the UPF0758 family.

In Histophilus somni (strain 2336) (Haemophilus somnus), this protein is UPF0758 protein HSM_0009.